The sequence spans 701 residues: Elongation factor G 1 (701 aa).

Residues Lys-13 to Leu-288 enclose the tr-type G domain. GTP-binding positions include Ala-22–Thr-29, Asp-86–His-90, and Asn-140–Asp-143.

Belongs to the TRAFAC class translation factor GTPase superfamily. Classic translation factor GTPase family. EF-G/EF-2 subfamily.

The protein resides in the cytoplasm. Functionally, catalyzes the GTP-dependent ribosomal translocation step during translation elongation. During this step, the ribosome changes from the pre-translocational (PRE) to the post-translocational (POST) state as the newly formed A-site-bound peptidyl-tRNA and P-site-bound deacylated tRNA move to the P and E sites, respectively. Catalyzes the coordinated movement of the two tRNA molecules, the mRNA and conformational changes in the ribosome. In Bdellovibrio bacteriovorus (strain ATCC 15356 / DSM 50701 / NCIMB 9529 / HD100), this protein is Elongation factor G 1.